The chain runs to 269 residues: Lipid II flippase Amj (269 aa).

7 helical membrane passes run 1–21 (MHVI…IHSI), 31–51 (SGAR…MVIV), 84–104 (FLIF…PSFV), 105–125 (ALFS…FQVF), 161–181 (LFVI…SALY), 192–212 (TAVM…AIFV), and 245–265 (VAGT…IAWL).

The protein belongs to the Amj family.

It is found in the cell membrane. The protein operates within cell wall biogenesis; peptidoglycan biosynthesis. Its function is as follows. Involved in peptidoglycan biosynthesis. Transports lipid-linked peptidoglycan precursors from the inner to the outer leaflet of the cytoplasmic membrane. May serve as a defense mechanism against naturally occurring MurJ antagonists. This Bacillus subtilis (strain 168) protein is Lipid II flippase Amj.